The primary structure comprises 260 residues: Magnesium dechelatase SGRL, chloroplastic (260 aa).

A chloroplast-targeting transit peptide spans Met1–Arg45.

This sequence belongs to the staygreen family. As to quaternary structure, interacts with the light harvesting complex II (LHCII). Interacts with the chlorophyll catabolic enzymes (CCEs) NYC1, NOL, PAO and RCCR. In terms of tissue distribution, expressed in cotyledons, pollen and young leaves.

The protein localises to the plastid. The protein resides in the chloroplast thylakoid. The enzyme catalyses chlorophyllide a + 2 H(+) = pheophorbide a + Mg(2+). Its function is as follows. Magnesium chelatase involved in chlorophyll a degradation in the chlorophyll-protein complexes of photosystem I (PSI) and photosystem II (PSII). Contributes to the degradation of PSI and PSII in the thylakoid membranes. Recombinant SGRL possesses high dechelating activity against chlorophyllide a, very low activity against chlorophyll a, and no activity against chlorophyll b. Contributes to abiotic stress-induced chlorophyll degradation and leaf yellowing during vegetative plant growth. The sequence is that of Magnesium dechelatase SGRL, chloroplastic from Arabidopsis thaliana (Mouse-ear cress).